The following is a 223-amino-acid chain: Cytidylate kinase (223 aa).

An ATP-binding site is contributed by 11 to 19 (GPAGVGKST).

This sequence belongs to the cytidylate kinase family. Type 1 subfamily.

It localises to the cytoplasm. It carries out the reaction CMP + ATP = CDP + ADP. It catalyses the reaction dCMP + ATP = dCDP + ADP. This Maridesulfovibrio salexigens (strain ATCC 14822 / DSM 2638 / NCIMB 8403 / VKM B-1763) (Desulfovibrio salexigens) protein is Cytidylate kinase.